We begin with the raw amino-acid sequence, 214 residues long: Large ribosomal subunit protein uL3 (214 aa).

The tract at residues 131-155 is disordered; the sequence is GAQRTSHGNSRSHRVPGSIGMAQDP. The residue at position 153 (Gln153) is an N5-methylglutamine.

The protein belongs to the universal ribosomal protein uL3 family. Part of the 50S ribosomal subunit. Forms a cluster with proteins L14 and L19. Post-translationally, methylated by PrmB.

Its function is as follows. One of the primary rRNA binding proteins, it binds directly near the 3'-end of the 23S rRNA, where it nucleates assembly of the 50S subunit. In Neisseria meningitidis serogroup C (strain 053442), this protein is Large ribosomal subunit protein uL3.